Reading from the N-terminus, the 294-residue chain is Protein ATC1/LIC4 (294 aa).

The disordered stretch occupies residues 114–178; it reads YTGKASLDKS…SSSLASSDAN (65 aa). A compositionally biased stretch (basic and acidic residues) spans 130 to 145; it reads HKPDKEQKNYKIDKPT. Positions 153–175 are enriched in low complexity; it reads LKTTNEPMLSPASLSPSSSLASS.

The protein resides in the cytoplasm. It localises to the nucleus. In terms of biological role, involved in cation homeostasis and in the regulation of the cation stress signaling cascades. Also involved in bipolar budding. The protein is Protein ATC1/LIC4 (ATC1) of Saccharomyces cerevisiae (strain ATCC 204508 / S288c) (Baker's yeast).